We begin with the raw amino-acid sequence, 262 residues long: Phosphonates import ATP-binding protein PhnC (262 aa).

An ABC transporter domain is found at 5–253 (IRVEKLAKTF…RFDHLYRSIN (249 aa)). ATP is bound at residue 37–44 (GPSGSGKS).

This sequence belongs to the ABC transporter superfamily. Phosphonates importer (TC 3.A.1.9.1) family. In terms of assembly, the complex is composed of two ATP-binding proteins (PhnC), two transmembrane proteins (PhnE) and a solute-binding protein (PhnD).

It is found in the cell inner membrane. It carries out the reaction phosphonate(out) + ATP + H2O = phosphonate(in) + ADP + phosphate + H(+). Functionally, part of the ABC transporter complex PhnCDE involved in phosphonates import. Responsible for energy coupling to the transport system. This Escherichia coli O6:K15:H31 (strain 536 / UPEC) protein is Phosphonates import ATP-binding protein PhnC.